The sequence spans 126 residues: Large ribosomal subunit protein bL20 (126 aa).

It belongs to the bacterial ribosomal protein bL20 family.

In terms of biological role, binds directly to 23S ribosomal RNA and is necessary for the in vitro assembly process of the 50S ribosomal subunit. It is not involved in the protein synthesizing functions of that subunit. This is Large ribosomal subunit protein bL20 from Parafrankia sp. (strain EAN1pec).